The following is a 215-amino-acid chain: Urease accessory protein UreG (215 aa).

The interval 1–21 (MNAPAPSSARRTKKLPPLRVG) is disordered. 24 to 31 (GPVGSGKT) is a binding site for GTP.

The protein belongs to the SIMIBI class G3E GTPase family. UreG subfamily. As to quaternary structure, homodimer. UreD, UreF and UreG form a complex that acts as a GTP-hydrolysis-dependent molecular chaperone, activating the urease apoprotein by helping to assemble the nickel containing metallocenter of UreC. The UreE protein probably delivers the nickel.

It localises to the cytoplasm. Functionally, facilitates the functional incorporation of the urease nickel metallocenter. This process requires GTP hydrolysis, probably effectuated by UreG. The chain is Urease accessory protein UreG from Burkholderia lata (strain ATCC 17760 / DSM 23089 / LMG 22485 / NCIMB 9086 / R18194 / 383).